The chain runs to 402 residues: Exodeoxyribonuclease 7 large subunit (402 aa).

The protein belongs to the XseA family. As to quaternary structure, heterooligomer composed of large and small subunits.

It is found in the cytoplasm. It catalyses the reaction Exonucleolytic cleavage in either 5'- to 3'- or 3'- to 5'-direction to yield nucleoside 5'-phosphates.. Bidirectionally degrades single-stranded DNA into large acid-insoluble oligonucleotides, which are then degraded further into small acid-soluble oligonucleotides. This chain is Exodeoxyribonuclease 7 large subunit, found in Moorella thermoacetica (strain ATCC 39073 / JCM 9320).